A 93-amino-acid polypeptide reads, in one-letter code: Small ribosomal subunit protein bS6 (93 aa).

This sequence belongs to the bacterial ribosomal protein bS6 family.

In terms of biological role, binds together with bS18 to 16S ribosomal RNA. This is Small ribosomal subunit protein bS6 from Phytoplasma australiense.